The primary structure comprises 126 residues: Aspartate 1-decarboxylase (126 aa).

Ser-25 functions as the Schiff-base intermediate with substrate; via pyruvic acid in the catalytic mechanism. A Pyruvic acid (Ser) modification is found at Ser-25. Substrate is bound at residue Thr-57. Tyr-58 serves as the catalytic Proton donor. 73 to 75 serves as a coordination point for substrate; sequence GAA.

Belongs to the PanD family. Heterooctamer of four alpha and four beta subunits. It depends on pyruvate as a cofactor. Is synthesized initially as an inactive proenzyme, which is activated by self-cleavage at a specific serine bond to produce a beta-subunit with a hydroxyl group at its C-terminus and an alpha-subunit with a pyruvoyl group at its N-terminus.

It localises to the cytoplasm. It catalyses the reaction L-aspartate + H(+) = beta-alanine + CO2. It participates in cofactor biosynthesis; (R)-pantothenate biosynthesis; beta-alanine from L-aspartate: step 1/1. Its function is as follows. Catalyzes the pyruvoyl-dependent decarboxylation of aspartate to produce beta-alanine. The protein is Aspartate 1-decarboxylase of Nitrosococcus oceani (strain ATCC 19707 / BCRC 17464 / JCM 30415 / NCIMB 11848 / C-107).